We begin with the raw amino-acid sequence, 371 residues long: Putative glutamate--cysteine ligase 2 (371 aa).

It belongs to the glutamate--cysteine ligase type 2 family. YbdK subfamily.

It catalyses the reaction L-cysteine + L-glutamate + ATP = gamma-L-glutamyl-L-cysteine + ADP + phosphate + H(+). Functionally, ATP-dependent carboxylate-amine ligase which exhibits weak glutamate--cysteine ligase activity. The protein is Putative glutamate--cysteine ligase 2 of Cupriavidus necator (strain ATCC 17699 / DSM 428 / KCTC 22496 / NCIMB 10442 / H16 / Stanier 337) (Ralstonia eutropha).